Here is a 253-residue protein sequence, read N- to C-terminus: Vitamin B12 import ATP-binding protein BtuD (253 aa).

An ABC transporter domain is found at 4 to 236; the sequence is LQLNNVSVGT…DVLSQVFEVD (233 aa). 32-39 is a binding site for ATP; sequence GPNGAGKS.

Belongs to the ABC transporter superfamily. Vitamin B12 importer (TC 3.A.1.13.1) family. As to quaternary structure, the complex is composed of two ATP-binding proteins (BtuD), two transmembrane proteins (BtuC) and a solute-binding protein (BtuF).

The protein localises to the cell inner membrane. It carries out the reaction an R-cob(III)alamin(out) + ATP + H2O = an R-cob(III)alamin(in) + ADP + phosphate + H(+). Functionally, part of the ABC transporter complex BtuCDF involved in vitamin B12 import. Responsible for energy coupling to the transport system. The polypeptide is Vitamin B12 import ATP-binding protein BtuD (Yersinia pestis).